Reading from the N-terminus, the 294-residue chain is FAD-dependent monooxygenase SAT1 (294 aa).

Residue D108 participates in FAD binding.

It belongs to the paxM FAD-dependent monooxygenase family. The cofactor is FAD.

Its pathway is mycotoxin biosynthesis. In terms of biological role, FAD-dependent monooxygenase; part of the satratoxin SC1 cluster involved in the biosynthesis of satratoxins, trichothecene mycotoxins that are associated with human food poisonings. Satratoxins are suggested to be made by products of multiple gene clusters (SC1, SC2 and SC3) that encode 21 proteins in all, including polyketide synthases, acetyltransferases, and other enzymes expected to modify the trichothecene skeleton. SC1 encodes 10 proteins, SAT1 to SAT10. The largest are SAT8, which encodes a putative polyketide synthase (PKS) with a conventional non-reducing architecture, and SAT10, a putative protein containing four ankyrin repeats and thus may be involved in protein scaffolding. The putative short-chain reductase SAT3 may assist the PKS in some capacity. SAT6 contains a secretory lipase domain and acts probably as a trichothecene esterase. SAT5 encodes a putative acetyltransferase, and so, with SAT6, may affect endogenous protection from toxicity. The probable transcription factor SAT9 may regulate the expression of the SC1 cluster. SC2 encodes proteins SAT11 to SAT16, the largest of which encodes the putative reducing PKS SAT13. SAT11 is a cytochrome P450 monooxygenase, while SAT14 and SAT16 are probable acetyltransferases. The SC2 cluster may be regulated by the transcription factor SAT15. SC3 is a small cluster that encodes 5 proteins, SAT17 to SAT21. SAT21 is a putative MFS-type transporter which may have a role in exporting secondary metabolites. The four other proteins putatively encoded in SC3 include the taurine hydroxylase-like protein SAT17, the O-methyltransferase SAT18, the acetyltransferase SAT19, and the Cys6-type zinc finger SAT20, the latter being probably involved in regulation of SC3 expression. The polypeptide is FAD-dependent monooxygenase SAT1 (Stachybotrys chartarum (strain CBS 109288 / IBT 7711) (Toxic black mold)).